A 334-amino-acid polypeptide reads, in one-letter code: Glyceraldehyde-3-phosphate dehydrogenase B (334 aa).

Residues 12 to 13, Asp-34, and Ser-121 contribute to the NAD(+) site; that span reads RI. D-glyceraldehyde 3-phosphate-binding positions include 149–151, Thr-180, 209–210, and Arg-232; these read SCT and TG. Cys-150 (nucleophile) is an active-site residue. An NAD(+)-binding site is contributed by Asn-314.

This sequence belongs to the glyceraldehyde-3-phosphate dehydrogenase family. Homotetramer.

It catalyses the reaction D-glyceraldehyde 3-phosphate + phosphate + NAD(+) = (2R)-3-phospho-glyceroyl phosphate + NADH + H(+). Its pathway is carbohydrate degradation; glycolysis; pyruvate from D-glyceraldehyde 3-phosphate: step 1/5. Glyceraldehyde-3-phosphate dehydrogenase; part of the gene cluster that mediates the biosynthesis of heptelidic acid (HA), a sesquiterpene lactone that acts as an inhibitor of glyceraldehyde-3-phosphatedehydrogenase (GAPDH) and a growth inhibitor of the salt-tolerant lactic acid bacteria in soy sauce brewing. The GAPDPH hepG/gdpB shows much higher resistance to HA than the GAPDH gpdA located outside of the cluster, but it does not seem to act in self-resistance. This is Glyceraldehyde-3-phosphate dehydrogenase B from Aspergillus oryzae (strain ATCC 42149 / RIB 40) (Yellow koji mold).